Here is a 521-residue protein sequence, read N- to C-terminus: Phosphoenolpyruvate carboxykinase (ATP) (521 aa).

Substrate is bound by residues arginine 52, tyrosine 186, and lysine 192. Residues lysine 192, histidine 211, and glycine 227–threonine 235 each bind ATP. Residues lysine 192 and histidine 211 each coordinate Mn(2+). Position 248 (aspartate 248) interacts with Mn(2+). ATP contacts are provided by residues glutamate 276, arginine 313, arginine 432 to isoleucine 433, and threonine 438. Substrate is bound at residue arginine 313.

The protein belongs to the phosphoenolpyruvate carboxykinase (ATP) family. Mn(2+) is required as a cofactor.

It is found in the cytoplasm. It carries out the reaction oxaloacetate + ATP = phosphoenolpyruvate + ADP + CO2. The protein operates within carbohydrate biosynthesis; gluconeogenesis. In terms of biological role, involved in the gluconeogenesis. Catalyzes the conversion of oxaloacetate (OAA) to phosphoenolpyruvate (PEP) through direct phosphoryl transfer between the nucleoside triphosphate and OAA. In Caldanaerobacter subterraneus subsp. tengcongensis (strain DSM 15242 / JCM 11007 / NBRC 100824 / MB4) (Thermoanaerobacter tengcongensis), this protein is Phosphoenolpyruvate carboxykinase (ATP).